A 202-amino-acid chain; its full sequence is Casparian strip membrane protein 1 (202 aa).

The Cytoplasmic segment spans residues M1–S42. The helical transmembrane segment at I43–M63 threads the bilayer. Residues G64 to T90 lie on the Extracellular side of the membrane. The chain crosses the membrane as a helical span at residues F91–I111. Over V112–D130 the chain is Cytoplasmic. A helical transmembrane segment spans residues T131–A151. Residues H152–R173 lie on the Extracellular side of the membrane. The helical transmembrane segment at V174–L194 threads the bilayer. Over S195–N202 the chain is Cytoplasmic.

It belongs to the Casparian strip membrane proteins (CASP) family. In terms of assembly, homodimer and heterodimers.

It localises to the cell membrane. In terms of biological role, regulates membrane-cell wall junctions and localized cell wall deposition. Required for establishment of the Casparian strip membrane domain (CSD) and the subsequent formation of Casparian strips, a cell wall modification of the root endodermis that determines an apoplastic barrier between the intraorganismal apoplasm and the extraorganismal apoplasm and prevents lateral diffusion. The polypeptide is Casparian strip membrane protein 1 (Striga hermonthica (Purple witchweed)).